We begin with the raw amino-acid sequence, 88 residues long: Cell division topological specificity factor (88 aa).

The protein belongs to the MinE family.

Functionally, prevents the cell division inhibition by proteins MinC and MinD at internal division sites while permitting inhibition at polar sites. This ensures cell division at the proper site by restricting the formation of a division septum at the midpoint of the long axis of the cell. This is Cell division topological specificity factor from Clostridium botulinum (strain Alaska E43 / Type E3).